A 129-amino-acid polypeptide reads, in one-letter code: Small ribosomal subunit protein uS12 (129 aa).

2 disordered regions span residues 1 to 25 and 110 to 129; these read MPTY…PALE and RKQG…VTKK. Basic residues predominate over residues 10-20; sequence FGRKSKTRKTK.

This sequence belongs to the universal ribosomal protein uS12 family. Part of the 30S ribosomal subunit. Contacts proteins S8 and S17. May interact with IF1 in the 30S initiation complex.

In terms of biological role, with S4 and S5 plays an important role in translational accuracy. Its function is as follows. Interacts with and stabilizes bases of the 16S rRNA that are involved in tRNA selection in the A site and with the mRNA backbone. Located at the interface of the 30S and 50S subunits, it traverses the body of the 30S subunit contacting proteins on the other side and probably holding the rRNA structure together. The combined cluster of proteins S8, S12 and S17 appears to hold together the shoulder and platform of the 30S subunit. This chain is Small ribosomal subunit protein uS12, found in Rickettsia conorii (strain ATCC VR-613 / Malish 7).